Consider the following 261-residue polypeptide: Cytochrome c oxidase subunit 3 (261 aa).

Residues 1–15 (MTKQMHAFHMVNPSP) are Mitochondrial matrix-facing. Residues 16–34 (WPLTGAASAFMLTSGLAMW) form a helical membrane-spanning segment. The Mitochondrial intermembrane portion of the chain corresponds to 35–40 (FHKHSN). The chain crosses the membrane as a helical span at residues 41 to 66 (TLIFLSMILMLLTMYQWWRDITREGT). Residues 67–72 (FQGHHT) lie on the Mitochondrial matrix side of the membrane. A helical transmembrane segment spans residues 73-105 (SLVQKSLRYGMILFIVSEVCFFFGFFWTFYHSS). At 106–128 (LSPSPDLGMMWPPKGVIPLDPFE) the chain is on the mitochondrial intermembrane side. Residues 129–152 (IPLLNTAILLGSGVSVTWAHHSLM) traverse the membrane as a helical segment. The Mitochondrial matrix segment spans residues 153 to 155 (EKT). Residues 156 to 183 (HKDMVISLSITIILGIYFTLLQGMEYFN) form a helical membrane-spanning segment. Residues 184–190 (STFNISD) lie on the Mitochondrial intermembrane side of the membrane. The chain crosses the membrane as a helical span at residues 191-223 (NAYGSTFFVATGFHGGHVIIGTLFLTVCLLRQL). The Mitochondrial matrix segment spans residues 224–232 (MFHFTSSHH). A helical transmembrane segment spans residues 233–256 (FGFEAAAWYWHFVDVVWLFLFISI). Topologically, residues 257 to 261 (YWWGS) are mitochondrial intermembrane.

The protein belongs to the cytochrome c oxidase subunit 3 family. As to quaternary structure, component of the cytochrome c oxidase (complex IV, CIV), a multisubunit enzyme composed of 14 subunits. The complex is composed of a catalytic core of 3 subunits MT-CO1, MT-CO2 and MT-CO3, encoded in the mitochondrial DNA, and 11 supernumerary subunits COX4I, COX5A, COX5B, COX6A, COX6B, COX6C, COX7A, COX7B, COX7C, COX8 and NDUFA4, which are encoded in the nuclear genome. The complex exists as a monomer or a dimer and forms supercomplexes (SCs) in the inner mitochondrial membrane with NADH-ubiquinone oxidoreductase (complex I, CI) and ubiquinol-cytochrome c oxidoreductase (cytochrome b-c1 complex, complex III, CIII), resulting in different assemblies (supercomplex SCI(1)III(2)IV(1) and megacomplex MCI(2)III(2)IV(2)).

It localises to the mitochondrion inner membrane. It carries out the reaction 4 Fe(II)-[cytochrome c] + O2 + 8 H(+)(in) = 4 Fe(III)-[cytochrome c] + 2 H2O + 4 H(+)(out). Functionally, component of the cytochrome c oxidase, the last enzyme in the mitochondrial electron transport chain which drives oxidative phosphorylation. The respiratory chain contains 3 multisubunit complexes succinate dehydrogenase (complex II, CII), ubiquinol-cytochrome c oxidoreductase (cytochrome b-c1 complex, complex III, CIII) and cytochrome c oxidase (complex IV, CIV), that cooperate to transfer electrons derived from NADH and succinate to molecular oxygen, creating an electrochemical gradient over the inner membrane that drives transmembrane transport and the ATP synthase. Cytochrome c oxidase is the component of the respiratory chain that catalyzes the reduction of oxygen to water. Electrons originating from reduced cytochrome c in the intermembrane space (IMS) are transferred via the dinuclear copper A center (CU(A)) of subunit 2 and heme A of subunit 1 to the active site in subunit 1, a binuclear center (BNC) formed by heme A3 and copper B (CU(B)). The BNC reduces molecular oxygen to 2 water molecules using 4 electrons from cytochrome c in the IMS and 4 protons from the mitochondrial matrix. The chain is Cytochrome c oxidase subunit 3 (MT-CO3) from Myxine glutinosa (Atlantic hagfish).